The sequence spans 154 residues: Myoglobin (154 aa).

In terms of domain architecture, Globin spans 1 to 147 (MADVKKNCLA…FNDECQHQLA (147 aa)). Histidine 96 is a heme b binding site.

Belongs to the globin family.

It is found in the cytoplasm. The protein is Myoglobin (GLBB) of Nippostrongylus brasiliensis (Rat hookworm).